Reading from the N-terminus, the 293-residue chain is Nucleotide-binding protein BBR47_52620 (293 aa).

17–24 lines the ATP pocket; it reads GMSGAGKT. 68–71 contacts GTP; that stretch reads DLRG.

Belongs to the RapZ-like family.

Functionally, displays ATPase and GTPase activities. In Brevibacillus brevis (strain 47 / JCM 6285 / NBRC 100599), this protein is Nucleotide-binding protein BBR47_52620.